Consider the following 240-residue polypeptide: UDP-2,3-diacylglucosamine hydrolase (240 aa).

Mn(2+) is bound by residues Asp-8, His-10, Asp-41, Asn-79, and His-114. 79-80 (NR) serves as a coordination point for substrate. Asp-122, Ser-160, Asn-164, Lys-167, and His-195 together coordinate substrate. Positions 195 and 197 each coordinate Mn(2+).

The protein belongs to the LpxH family. Mn(2+) serves as cofactor.

The protein resides in the cell inner membrane. It carries out the reaction UDP-2-N,3-O-bis[(3R)-3-hydroxytetradecanoyl]-alpha-D-glucosamine + H2O = 2-N,3-O-bis[(3R)-3-hydroxytetradecanoyl]-alpha-D-glucosaminyl 1-phosphate + UMP + 2 H(+). It functions in the pathway glycolipid biosynthesis; lipid IV(A) biosynthesis; lipid IV(A) from (3R)-3-hydroxytetradecanoyl-[acyl-carrier-protein] and UDP-N-acetyl-alpha-D-glucosamine: step 4/6. Hydrolyzes the pyrophosphate bond of UDP-2,3-diacylglucosamine to yield 2,3-diacylglucosamine 1-phosphate (lipid X) and UMP by catalyzing the attack of water at the alpha-P atom. Involved in the biosynthesis of lipid A, a phosphorylated glycolipid that anchors the lipopolysaccharide to the outer membrane of the cell. This Salmonella arizonae (strain ATCC BAA-731 / CDC346-86 / RSK2980) protein is UDP-2,3-diacylglucosamine hydrolase.